We begin with the raw amino-acid sequence, 436 residues long: Trigger factor (436 aa).

The PPIase FKBP-type domain occupies 163-248 (GDRVTVDFEG…LKKIEAAHLP (86 aa)).

It belongs to the FKBP-type PPIase family. Tig subfamily.

It localises to the cytoplasm. The catalysed reaction is [protein]-peptidylproline (omega=180) = [protein]-peptidylproline (omega=0). Functionally, involved in protein export. Acts as a chaperone by maintaining the newly synthesized protein in an open conformation. Functions as a peptidyl-prolyl cis-trans isomerase. The sequence is that of Trigger factor from Albidiferax ferrireducens (strain ATCC BAA-621 / DSM 15236 / T118) (Rhodoferax ferrireducens).